Consider the following 222-residue polypeptide: Abasic site processing protein YedK (222 aa).

Cysteine 2 serves as the catalytic Nucleophile. Cysteine 2 is modified (thiazolidine linkage to a ring-opened DNA abasic site). Glutamate 105 is an active-site residue.

Belongs to the SOS response-associated peptidase family.

Its activity is regulated as follows. Formation and reversal of DNA-protein cross-link depends on DNA context. Catalyzes formation of the thiazolidine linkage in presence of abasic sites in single-stranded DNA. Mediates the reversal of the thiazolidine cross-link in presence of double stranded DNA. Its function is as follows. Sensor of abasic sites in single-stranded DNA (ssDNA) required to preserve genome integrity by promoting error-free repair of abasic sites. Recognizes and binds abasic sites in ssDNA at replication forks and chemically modifies the lesion by forming a covalent cross-link with DNA: forms a stable thiazolidine linkage between a ring-opened abasic site and the alpha-amino and sulfhydryl substituents of its N-terminal catalytic cysteine residue. The DNA-protein cross-link is then reversed: able to catalyze the reversal of the thiazolidine cross-link and cycle between a cross-link and a non-cross-linked state depending on DNA context: mediates self-reversal of the thiazolidine cross-link in double stranded DNA. May act as a protease: mediates autocatalytic processing of its N-terminal methionine in order to expose the catalytic cysteine. This Escherichia coli (strain K12) protein is Abasic site processing protein YedK.